We begin with the raw amino-acid sequence, 280 residues long: Probable formate transporter (280 aa).

A run of 6 helical transmembrane segments spans residues 33-49 (LSFV…LLAE), 67-83 (LVFG…VVIA), 116-133 (SWVF…VLAY), 177-195 (FWRA…YLAV), 204-219 (SFGI…CIGF), and 253-272 (LGNI…FTYL).

This sequence belongs to the FNT transporter (TC 1.A.16) family.

The protein resides in the cell membrane. May act as a formate transporter. The chain is Probable formate transporter (fdhC) from Methanobacterium formicicum.